The primary structure comprises 20 residues: Mite allergen Der p 6 (20 aa).

Residues 1–20 (AIGXQPAAEAEAPFQISLMK) enclose the Peptidase S1 domain.

It belongs to the peptidase S1 family.

Its subcellular location is the secreted. Its function is as follows. Protease that shows specificity similar to chymotrypsin. In Dermatophagoides pteronyssinus (European house dust mite), this protein is Mite allergen Der p 6 (DERP6).